A 394-amino-acid chain; its full sequence is RILP-like protein 1 (394 aa).

Residues glutamate 2–lysine 89 form the RH1 domain. Residues glutamate 68 to glutamine 327 are a coiled coil. Positions arginine 282 to leucine 347 constitute an RH2 domain.

This sequence belongs to the RILPL family.

It is found in the cytoplasm. The protein localises to the cytosol. Its subcellular location is the cytoskeleton. The protein resides in the microtubule organizing center. It localises to the centrosome. It is found in the cell projection. The protein localises to the cilium. Its function is as follows. Plays a role in the regulation of cell shape and polarity. Plays a role in cellular protein transport, including protein transport away from primary cilia. Neuroprotective protein. This Xenopus laevis (African clawed frog) protein is RILP-like protein 1 (rilpl1).